We begin with the raw amino-acid sequence, 835 residues long: uncharacterized protein (835 aa).

Disordered regions lie at residues 1-38 (MKTS…VGSR), 317-477 (DFDL…QSGR), 489-668 (SLSK…IKRR), 721-750 (DLEN…VSSF), and 810-835 (QEQQ…ELMF). Low complexity-rich tracts occupy residues 7–37 (STVP…TVGS), 328–351 (NNNN…TPTT), and 361–395 (SSTN…SGSS). 2 stretches are compositionally biased toward polar residues: residues 396-406 (IGNRTEVSSSI) and 415-424 (IIRSKSSLGT). Residues 432–442 (GGSGGGGGGGM) show a composition bias toward gly residues. Residues 449-477 (PISKTPTTMITKTASSSSPNLATSTQSGR) show a composition bias toward polar residues. The segment covering 489–510 (SLSKQSSSSNLTRSLPPIIKSP) has biased composition (low complexity). The segment covering 511-521 (ISPPGPTPPAP) has biased composition (pro residues). Low complexity predominate over residues 522 to 629 (TLTKSKSTPS…STTSSATKKS (108 aa)). Residues 631–640 (ITKTNPTDEQ) are compositionally biased toward polar residues. 2 stretches are compositionally biased toward low complexity: residues 641–664 (TTTP…STSS) and 724–750 (NNNN…VSSF). Residues 826-835 (ILDEDDELMF) are compositionally biased toward acidic residues.

This is an uncharacterized protein from Dictyostelium discoideum (Social amoeba).